A 230-amino-acid polypeptide reads, in one-letter code: Probable phosphatase IndB (230 aa).

Aspartate 8 serves as the catalytic Nucleophile. Mg(2+)-binding residues include aspartate 8, aspartate 10, and aspartate 169. Catalysis depends on aspartate 10, which acts as the Proton donor.

It belongs to the HAD-like hydrolase superfamily. Requires Mg(2+) as cofactor.

Its function is as follows. Part of an operon that could be involved in the biosynthesis of the blue pigment indigoidine, which is implicated in pathogenicity and protection from oxidative stress. The sequence is that of Probable phosphatase IndB from Dickeya dadantii (strain 3937) (Erwinia chrysanthemi (strain 3937)).